The sequence spans 887 residues: MKKKKVITFIAIIILLLILFLYRSTSFIIDFQWFQELSYTSVFLKEFFTIGKLFTLSFALIFISIWLYYLSLKKNINWQEHNKRKKLMIAFNCIVSSLFAYFFSSKYWYQILQFNNSVPFDIKDPIFNKDISFYIFKLPFLQSIYVLILRVLVFLVIYTLILYFIINLKDKIKEINFRKTLNIKSIKNDVKDFAGKQLAVVSAIILLFLSMGYIIKSRNLVYSPRGLIFGASYTDINISLLIYRIIIIVSFIGSIVVFISIINKKIKPIIISLVLIFLLILSEGATSKLVQTFVVNSNEKKLEEPFVRYNIDYTRKAFDIDDIEEINFDINNNLTAQDIKNNKESIDNIRINSFEPALEFYNQYQTIRPYYIFNDIDIDRYKINGKESQIFISARELNLKAIEPNTWQNRHLIYTHGYGVAMSKVNSVTEEGQPDFSIKDIPQVNNTDILIDNPRIYFGEKTDEYAIINTKLKEFDYPQGANNKITEYDGKSGIKMNLLNKIIFAINKKDLNFLLSRDVTRESRILINRNIVERAKKIAPFLTYDNDPHLVIHDNKLYWVIDAYTTSNKYPYSQPYEDINYIRNSAKVIIDAIDGDINFYITNKNDPIIVSYSKIFKNLFKDYSKIPEGIKEHLKYPEDIFKIQCKVFEKYHMTDTIAFLNGDDLWELSQDEKTMNTDKATNESPYVFMKLPNDNLEEMILLGYFNMKQRNTMSSMLAARMTSDNYGKLIMYRFPIHKTIYSPYFFKQKIKQDPLISKELSLWNIGEGGAKVQFGDTIILPINNSLLYVESMYLRAKGKNSAPEVKGIILSYGDKIVLDTTMDEALTKLFTKKEEGKEENIEDNKINSIKEAKVIYDKAIKAQRDGDWAKYGEYIKKLGNILEYMVK.

The next 7 membrane-spanning stretches (helical) occupy residues Phe-9 to Ile-29, Phe-47 to Leu-67, Leu-87 to Tyr-107, Val-146 to Ile-166, Gly-195 to Ile-215, Ile-242 to Ile-262, and Ile-266 to Thr-286.

Belongs to the UPF0182 family.

It is found in the cell membrane. This is UPF0182 protein CTC_00086 from Clostridium tetani (strain Massachusetts / E88).